The chain runs to 158 residues: 6,7-dimethyl-8-ribityllumazine synthase (158 aa).

Residues F24, 58–60, and 82–84 each bind 5-amino-6-(D-ribitylamino)uracil; these read AFE and AVI. 87-88 serves as a coordination point for (2S)-2-hydroxy-3-oxobutyl phosphate; it reads GT. Catalysis depends on H90, which acts as the Proton donor. 5-amino-6-(D-ribitylamino)uracil is bound at residue F115. R129 lines the (2S)-2-hydroxy-3-oxobutyl phosphate pocket.

The protein belongs to the DMRL synthase family. Forms an icosahedral capsid composed of 60 subunits, arranged as a dodecamer of pentamers.

The enzyme catalyses (2S)-2-hydroxy-3-oxobutyl phosphate + 5-amino-6-(D-ribitylamino)uracil = 6,7-dimethyl-8-(1-D-ribityl)lumazine + phosphate + 2 H2O + H(+). The protein operates within cofactor biosynthesis; riboflavin biosynthesis; riboflavin from 2-hydroxy-3-oxobutyl phosphate and 5-amino-6-(D-ribitylamino)uracil: step 1/2. Functionally, catalyzes the formation of 6,7-dimethyl-8-ribityllumazine by condensation of 5-amino-6-(D-ribitylamino)uracil with 3,4-dihydroxy-2-butanone 4-phosphate. This is the penultimate step in the biosynthesis of riboflavin. The chain is 6,7-dimethyl-8-ribityllumazine synthase from Azotobacter vinelandii (strain DJ / ATCC BAA-1303).